Here is a 185-residue protein sequence, read N- to C-terminus: Ribosome-recycling factor (185 aa).

It belongs to the RRF family.

The protein resides in the cytoplasm. Functionally, responsible for the release of ribosomes from messenger RNA at the termination of protein biosynthesis. May increase the efficiency of translation by recycling ribosomes from one round of translation to another. This Corynebacterium glutamicum (strain R) protein is Ribosome-recycling factor.